A 127-amino-acid polypeptide reads, in one-letter code: Small ribosomal subunit protein uS13 (127 aa).

Positions 92–127 are disordered; the sequence is HRQGLPVRGQRTRTNARTRRGRRLTVAGKKKAPSKK. Residues 101–127 show a composition bias toward basic residues; the sequence is QRTRTNARTRRGRRLTVAGKKKAPSKK.

This sequence belongs to the universal ribosomal protein uS13 family. Part of the 30S ribosomal subunit. Forms a loose heterodimer with protein S19. Forms two bridges to the 50S subunit in the 70S ribosome.

Its function is as follows. Located at the top of the head of the 30S subunit, it contacts several helices of the 16S rRNA. In the 70S ribosome it contacts the 23S rRNA (bridge B1a) and protein L5 of the 50S subunit (bridge B1b), connecting the 2 subunits; these bridges are implicated in subunit movement. Contacts the tRNAs in the A and P-sites. This chain is Small ribosomal subunit protein uS13, found in Gloeothece citriformis (strain PCC 7424) (Cyanothece sp. (strain PCC 7424)).